Consider the following 292-residue polypeptide: Xyloglucan endotransglucosylase/hydrolase protein A (292 aa).

The signal sequence occupies residues 1–20; it reads MGSSLWTCLILLSLASASFA. The GH16 domain maps to 21–219; that stretch reads ANPRTPIDVP…WSKAPFIASY (199 aa). Glutamate 105 (nucleophile) is an active-site residue. Glutamate 109 (proton donor) is an active-site residue. Residue glutamate 109 coordinates xyloglucan. An N-linked (GlcNAc...) asparagine glycan is attached at asparagine 113. Xyloglucan contacts are provided by residues 122-124, 132-134, 198-199, and glycine 203; these read QTN, DRE, and DW. 2 disulfide bridges follow: cysteine 227/cysteine 236 and cysteine 273/cysteine 286. A xyloglucan-binding site is contributed by arginine 278.

Belongs to the glycosyl hydrolase 16 family. XTH group 1 subfamily. Contains at least one intrachain disulfide bond essential for its enzymatic activity. As to expression, predominantly expressed in the phloem fibers of growing internodes. Expressed in xylem cells in the basal part of the internode. In the internode, it is expressed closer to the top of the internode compared to XTHB.

Its subcellular location is the secreted. The protein localises to the cell wall. The protein resides in the extracellular space. It is found in the apoplast. The catalysed reaction is breaks a beta-(1-&gt;4) bond in the backbone of a xyloglucan and transfers the xyloglucanyl segment on to O-4 of the non-reducing terminal glucose residue of an acceptor, which can be a xyloglucan or an oligosaccharide of xyloglucan.. Its function is as follows. Catalyzes xyloglucan endohydrolysis (XEH) and/or endotransglycosylation (XET). Cleaves and religates xyloglucan polymers, an essential constituent of the primary cell wall, and thereby participates in cell wall construction of growing tissues. The sequence is that of Xyloglucan endotransglucosylase/hydrolase protein A (XTHA) from Phaseolus angularis (Azuki bean).